The primary structure comprises 133 residues: Small ribosomal subunit protein uS8 (133 aa).

Belongs to the universal ribosomal protein uS8 family. Part of the 30S ribosomal subunit. Contacts proteins S5 and S12.

One of the primary rRNA binding proteins, it binds directly to 16S rRNA central domain where it helps coordinate assembly of the platform of the 30S subunit. The sequence is that of Small ribosomal subunit protein uS8 from Syntrophus aciditrophicus (strain SB).